Here is a 140-residue protein sequence, read N- to C-terminus: Cystatin-like 1 (140 aa).

Residues 1–23 (MEMKARGLRIPLLLLLVTVVVMA) form the signal peptide. The Cystatin domain occupies 32–126 (GGFKEKAMSK…CKSLIYSVPW (95 aa)). N-linked (GlcNAc...) asparagine glycosylation occurs at Asn-45. Intrachain disulfides connect Cys-94/Cys-104 and Cys-117/Cys-137.

It belongs to the cystatin family. As to expression, highly expressed in testis where it localizes to spermatogonium, spermatocyes and round spermatids. Not detected in spermatozoa. Also detected in epididymis, cerebrum and pituitary.

The protein localises to the secreted. The chain is Cystatin-like 1 from Mus musculus (Mouse).